An 857-amino-acid chain; its full sequence is Leucine--tRNA ligase (857 aa).

The 'HIGH' region signature appears at 42-52 (PYPSGRLHMGH). A 'KMSKS' region motif is present at residues 617 to 621 (KMSKS). K620 provides a ligand contact to ATP.

This sequence belongs to the class-I aminoacyl-tRNA synthetase family.

Its subcellular location is the cytoplasm. It catalyses the reaction tRNA(Leu) + L-leucine + ATP = L-leucyl-tRNA(Leu) + AMP + diphosphate. The polypeptide is Leucine--tRNA ligase (Vibrio parahaemolyticus serotype O3:K6 (strain RIMD 2210633)).